Consider the following 354-residue polypeptide: 3'-hydroxy-N-methyl-(S)-coclaurine 4'-O-methyltransferase 1 (354 aa).

Position 223 (Asp223) interacts with S-adenosyl-L-methionine. His261 functions as the Proton acceptor in the catalytic mechanism.

This sequence belongs to the class I-like SAM-binding methyltransferase superfamily. Cation-independent O-methyltransferase family. COMT subfamily. As to expression, expressed in roots, stems, leaves and flowers. Restricted to sieve elements of the phloem adjacent or proximal to laticifers.

The enzyme catalyses (S)-3'-hydroxy-N-methylcoclaurine + S-adenosyl-L-methionine = (S)-reticuline + S-adenosyl-L-homocysteine + H(+). Its pathway is alkaloid biosynthesis; (S)-reticuline biosynthesis; (S)-reticuline from (S)-norcoclaurine: step 4/4. Its function is as follows. Involved in the biosynthesis of benzylisoquinoline alkaloids. Catalyzes the transfer of the methyl group to the 4'-hydroxyl group of 3'-hydroxy-N-methylcoclaurine to form reticuline. Also involved in the papaverine biosynthesis. This Papaver somniferum (Opium poppy) protein is 3'-hydroxy-N-methyl-(S)-coclaurine 4'-O-methyltransferase 1.